The chain runs to 177 residues: Large ribosomal subunit protein uL6 (177 aa).

This sequence belongs to the universal ribosomal protein uL6 family. Part of the 50S ribosomal subunit.

Functionally, this protein binds to the 23S rRNA, and is important in its secondary structure. It is located near the subunit interface in the base of the L7/L12 stalk, and near the tRNA binding site of the peptidyltransferase center. This Pseudomonas syringae pv. syringae (strain B728a) protein is Large ribosomal subunit protein uL6.